A 349-amino-acid polypeptide reads, in one-letter code: DNA polymerase IV (349 aa).

A UmuC domain is found at 4-185 (IIHIDCDCFY…LPVAKLHGVG (182 aa)). 2 residues coordinate Mg(2+): Asp-8 and Asp-103. Glu-104 is a catalytic residue.

Belongs to the DNA polymerase type-Y family. Monomer. It depends on Mg(2+) as a cofactor.

The protein resides in the cytoplasm. It carries out the reaction DNA(n) + a 2'-deoxyribonucleoside 5'-triphosphate = DNA(n+1) + diphosphate. Poorly processive, error-prone DNA polymerase involved in untargeted mutagenesis. Copies undamaged DNA at stalled replication forks, which arise in vivo from mismatched or misaligned primer ends. These misaligned primers can be extended by PolIV. Exhibits no 3'-5' exonuclease (proofreading) activity. May be involved in translesional synthesis, in conjunction with the beta clamp from PolIII. The chain is DNA polymerase IV from Pseudomonas aeruginosa (strain UCBPP-PA14).